A 213-amino-acid polypeptide reads, in one-letter code: V-type proton ATPase subunit c'' (213 aa).

The Vacuolar portion of the chain corresponds to 1–14 (MNKESKDDDMSLGK). Residues 15–35 (FSFSHFLYYLVLIVVIVYGLY) traverse the membrane as a helical segment. The Cytoplasmic portion of the chain corresponds to 36–61 (KLFTGHGSDINFGKFLLRTSPYMWAN). Residues 62–82 (LGIALCVGLSVVGAAWGIFIT) traverse the membrane as a helical segment. Topologically, residues 83-100 (GSSMIGAGVRAPRITTKN) are vacuolar. Residues 101–121 (LISIIFCEVVAIYGLIIAIVF) traverse the membrane as a helical segment. Residues 122–144 (SSKLTVATAENMYSKSNLYTGYS) are Cytoplasmic-facing. Residues 145-165 (LFWAGITVGASNLICGIAVGI) traverse the membrane as a helical segment. Over 166–183 (TGATAAISDAADSALFVK) the chain is Vacuolar. The chain crosses the membrane as a helical span at residues 184–204 (ILVIEIFGSILGLLGLIVGLL). At 205–213 (MAGKASEFQ) the chain is on the cytoplasmic side.

This sequence belongs to the V-ATPase proteolipid subunit family. As to quaternary structure, V-ATPase is a heteromultimeric enzyme composed of a peripheral catalytic V1 complex (components A to H) attached to an integral membrane V0 proton pore complex (components: a, c, c', c'', d, e, f and VOA1). The decameric c-ring forms the proton-conducting pore, and is composed of eight proteolipid subunits c, one subunit c' and one subunit c''.

The protein resides in the vacuole membrane. Proton-conducting pore forming subunit of the V0 complex of vacuolar(H+)-ATPase (V-ATPase), a multisubunit enzyme composed of a peripheral complex (V1) that hydrolyzes ATP and a membrane integral complex (V0) that translocates protons. V-ATPase is responsible for acidifying and maintaining the pH of intracellular compartments. This chain is V-type proton ATPase subunit c'' (VMA16), found in Saccharomyces cerevisiae (strain ATCC 204508 / S288c) (Baker's yeast).